Reading from the N-terminus, the 384-residue chain is Putative sarcosine oxidase (384 aa).

Position 6–36 (6–36 (DVVVVGAGIFGSCTAYNCQKIGLKTLLLEQF)) interacts with FAD. C315 carries the post-translational modification S-8alpha-FAD cysteine.

This sequence belongs to the MSOX/MTOX family. FAD is required as a cofactor.

It catalyses the reaction sarcosine + O2 + H2O = formaldehyde + glycine + H2O2. The polypeptide is Putative sarcosine oxidase (Caenorhabditis elegans).